The following is a 196-amino-acid chain: Glycerol-3-phosphate acyltransferase (196 aa).

A run of 4 helical transmembrane segments spans residues 5 to 25 (GLIAFAFGYLLGSIPFGMILT), 70 to 90 (VVIALLLSGPGAAMAATLGAF), 111 to 131 (IGVLLGLFWPAALAFCAIWLL), and 152 to 172 (LLLWGFGHPQFALLFAVLTVL).

Belongs to the PlsY family. As to quaternary structure, probably interacts with PlsX.

The protein localises to the cell inner membrane. The catalysed reaction is an acyl phosphate + sn-glycerol 3-phosphate = a 1-acyl-sn-glycero-3-phosphate + phosphate. It functions in the pathway lipid metabolism; phospholipid metabolism. Functionally, catalyzes the transfer of an acyl group from acyl-phosphate (acyl-PO(4)) to glycerol-3-phosphate (G3P) to form lysophosphatidic acid (LPA). This enzyme utilizes acyl-phosphate as fatty acyl donor, but not acyl-CoA or acyl-ACP. This is Glycerol-3-phosphate acyltransferase from Nitrobacter winogradskyi (strain ATCC 25391 / DSM 10237 / CIP 104748 / NCIMB 11846 / Nb-255).